The primary structure comprises 392 residues: Succinyl-diaminopimelate desuccinylase (392 aa).

H77 provides a ligand contact to Zn(2+). The active site involves D79. D110 contacts Zn(2+). E144 serves as the catalytic Proton acceptor. Zn(2+) contacts are provided by E145, E173, and H359.

Belongs to the peptidase M20A family. DapE subfamily. Homodimer. Zn(2+) is required as a cofactor. It depends on Co(2+) as a cofactor.

It carries out the reaction N-succinyl-(2S,6S)-2,6-diaminopimelate + H2O = (2S,6S)-2,6-diaminopimelate + succinate. The protein operates within amino-acid biosynthesis; L-lysine biosynthesis via DAP pathway; LL-2,6-diaminopimelate from (S)-tetrahydrodipicolinate (succinylase route): step 3/3. Functionally, catalyzes the hydrolysis of N-succinyl-L,L-diaminopimelic acid (SDAP), forming succinate and LL-2,6-diaminopimelate (DAP), an intermediate involved in the bacterial biosynthesis of lysine and meso-diaminopimelic acid, an essential component of bacterial cell walls. This is Succinyl-diaminopimelate desuccinylase from Thiobacillus denitrificans (strain ATCC 25259 / T1).